A 324-amino-acid chain; its full sequence is Histidine N-acetyltransferase (324 aa).

In terms of domain architecture, N-acetyltransferase spans 15–151 (FEFVLAAEKE…GILLLSFNAP (137 aa)).

The enzyme catalyses L-histidine + acetyl-CoA = N(alpha)-acetyl-L-histidine + CoA + H(+). Enzyme responsible for the N-acetyl-histidine (NAH) synthesis, which is a major constituent of brain and lens of ectothermic vertebrates. The protein is Histidine N-acetyltransferase (hisat) of Xenopus tropicalis (Western clawed frog).